A 47-amino-acid polypeptide reads, in one-letter code: RVCMGKSQHHSFPCISDRLCSNECVKEEGGWTAGYCHLRYCRCQKAC.

Intrachain disulfides connect Cys3-Cys47, Cys14-Cys36, Cys20-Cys41, and Cys24-Cys43.

This sequence belongs to the DEFL family. Protease inhibitor I18 (RTI/MTI-2) subfamily.

This chain is Defensin-like protein 1, found in Sorghum bicolor (Sorghum).